Consider the following 142-residue polypeptide: Large ribosomal subunit protein uL13 (142 aa).

Belongs to the universal ribosomal protein uL13 family. In terms of assembly, part of the 50S ribosomal subunit.

Functionally, this protein is one of the early assembly proteins of the 50S ribosomal subunit, although it is not seen to bind rRNA by itself. It is important during the early stages of 50S assembly. In Acholeplasma laidlawii (strain PG-8A), this protein is Large ribosomal subunit protein uL13.